Here is a 723-residue protein sequence, read N- to C-terminus: Transmembrane channel-like protein 7 (723 aa).

Disordered stretches follow at residues 1-28 and 51-71; these read MSES…LSLD and RRRT…KPTD. Residues 1 to 168 are Extracellular-facing; that stretch reads MSESSGSALQ…GIQSYFSFLR (168 aa). N-linked (GlcNAc...) asparagine glycosylation occurs at N24. N-linked (GlcNAc...) asparagine glycosylation is present at N84. S89 is modified (phosphoserine). The N-linked (GlcNAc...) asparagine glycan is linked to N96. The chain crosses the membrane as a helical span at residues 169-189; it reads FLVLLNLVIFLIIFMLVLLPV. Over 190 to 219 the chain is Cytoplasmic; that stretch reads LLTKYKITNSSFVLIPFKDMDKQCTVYPVS. A helical membrane pass occupies residues 220–240; sequence SSGLIYFYSYIIDLLSGTGFL. Topologically, residues 241–263 are extracellular; the sequence is EETSLFYGHYTIDGVKFQNFTYD. A glycan (N-linked (GlcNAc...) asparagine) is linked at N259. The chain crosses the membrane as a helical span at residues 264 to 284; that stretch reads LPLAYLLSTIASLALSLLWIV. Residues 285-362 are Cytoplasmic-facing; it reads KRSVEGFKIN…EETIRIYSLR (78 aa). The helical transmembrane segment at 363 to 383 threads the bilayer; it reads LFLNCIVLAVLGACFYAIYVA. Residues 384 to 404 lie on the Extracellular side of the membrane; that stretch reads TVFSQEHMKKEIDKMVFGENL. The chain crosses the membrane as a helical span at residues 405–425; sequence FILYLPSIVITLANFITPMIF. The Cytoplasmic portion of the chain corresponds to 426-494; it reads AKIIRYEDYS…PCWETQVGQE (69 aa). Residues 495–515 form a helical membrane-spanning segment; the sequence is MYKLMIFDFIIILAVTLFVDF. The Extracellular portion of the chain corresponds to 516–555; sequence PRKLLVTYCSSCKLIQCWGQQEFAIPDNVLGIVYGQTICW. The helical transmembrane segment at 556–576 threads the bilayer; it reads IGAFFSPLLPAIATLKFIIIF. Residues 577–601 are Cytoplasmic-facing; sequence YVKEWSLLYTCRPSPRPFRASNSNF. The chain crosses the membrane as a helical span at residues 602–622; the sequence is FFLLVLLIGLCLAIIPLTISI. Topologically, residues 623–665 are extracellular; it reads SRIPSSKACGPFTNFNTTWEVIPKTVSTFPSSLQSFIHGVTSE. Residue N638 is glycosylated (N-linked (GlcNAc...) asparagine). The helical transmembrane segment at 666–686 threads the bilayer; that stretch reads AFAVPFFMIICLIMFYFIALA. At 687–723 the chain is on the cytoplasmic side; that stretch reads GAHKRVVIQLREQLSLESRDKCYLIQKLTEAQRDMRN.

It belongs to the TMC family. In terms of assembly, interacts with PIEZO2; the interaction inhibits PIEZO2-conducted mechanically activated currents.

The protein resides in the membrane. In terms of biological role, acts as an inhibitory modulator of PIEZO2 mechanosensitive channel in dorsal root ganglion (DRG) neurons through physical interactions or interference with the interaction between PIEZO2 and the cytoskeleton. The protein is Transmembrane channel-like protein 7 of Homo sapiens (Human).